A 227-amino-acid chain; its full sequence is Phosphoribosylformylglycinamidine synthase subunit PurQ (227 aa).

In terms of domain architecture, Glutamine amidotransferase type-1 spans 2-226 (KFAVIQFPGS…VKAWKEEQVN (225 aa)). The active-site Nucleophile is the C86. Catalysis depends on residues H195 and E197.

In terms of assembly, part of the FGAM synthase complex composed of 1 PurL, 1 PurQ and 2 PurS subunits.

The protein resides in the cytoplasm. The catalysed reaction is N(2)-formyl-N(1)-(5-phospho-beta-D-ribosyl)glycinamide + L-glutamine + ATP + H2O = 2-formamido-N(1)-(5-O-phospho-beta-D-ribosyl)acetamidine + L-glutamate + ADP + phosphate + H(+). The enzyme catalyses L-glutamine + H2O = L-glutamate + NH4(+). The protein operates within purine metabolism; IMP biosynthesis via de novo pathway; 5-amino-1-(5-phospho-D-ribosyl)imidazole from N(2)-formyl-N(1)-(5-phospho-D-ribosyl)glycinamide: step 1/2. Its function is as follows. Part of the phosphoribosylformylglycinamidine synthase complex involved in the purines biosynthetic pathway. Catalyzes the ATP-dependent conversion of formylglycinamide ribonucleotide (FGAR) and glutamine to yield formylglycinamidine ribonucleotide (FGAM) and glutamate. The FGAM synthase complex is composed of three subunits. PurQ produces an ammonia molecule by converting glutamine to glutamate. PurL transfers the ammonia molecule to FGAR to form FGAM in an ATP-dependent manner. PurS interacts with PurQ and PurL and is thought to assist in the transfer of the ammonia molecule from PurQ to PurL. This Listeria monocytogenes serotype 4b (strain CLIP80459) protein is Phosphoribosylformylglycinamidine synthase subunit PurQ.